Here is an 807-residue protein sequence, read N- to C-terminus: Enhancer of polycomb homolog 2 (807 aa).

Glycyl lysine isopeptide (Lys-Gly) (interchain with G-Cter in SUMO2) cross-links involve residues lysine 135, lysine 195, lysine 324, and lysine 362. The disordered stretch occupies residues 376 to 396; that stretch reads DEFPQVLSPVSEPEEENDPDG. Serine 538 bears the Phosphoserine mark. Positions 600–613 are enriched in low complexity; that stretch reads QLQQKQQSQHSSQQ. 2 disordered regions span residues 600 to 628 and 645 to 673; these read QLQQ…DCMS and SAPV…QPSG. Polar residues-rich tracts occupy residues 614–628 and 657–673; these read THPK…DCMS and EQNT…QPSG. Phosphoserine is present on serine 754.

This sequence belongs to the enhancer of polycomb family.

It localises to the nucleus. Its function is as follows. May play a role in transcription or DNA repair. This chain is Enhancer of polycomb homolog 2 (EPC2), found in Homo sapiens (Human).